We begin with the raw amino-acid sequence, 158 residues long: MVVIGFDPGTAITGYGILNKGEDGISIIEYGALTTPSGWGIGRRLNYLFDQVSSLLDLYNPDVVVMENIFFNKNIKTAINIGQAQGVIILAAEQHQKEISILTPLEVKLSVVGYGRATKNQIQYMVKEILKLKDIPKPDDVADALALCISYIYKQEGC.

Active-site residues include D7, E67, and D140. 3 residues coordinate Mg(2+): D7, E67, and D140.

It belongs to the RuvC family. In terms of assembly, homodimer which binds Holliday junction (HJ) DNA. The HJ becomes 2-fold symmetrical on binding to RuvC with unstacked arms; it has a different conformation from HJ DNA in complex with RuvA. In the full resolvosome a probable DNA-RuvA(4)-RuvB(12)-RuvC(2) complex forms which resolves the HJ. Requires Mg(2+) as cofactor.

The protein resides in the cytoplasm. The enzyme catalyses Endonucleolytic cleavage at a junction such as a reciprocal single-stranded crossover between two homologous DNA duplexes (Holliday junction).. In terms of biological role, the RuvA-RuvB-RuvC complex processes Holliday junction (HJ) DNA during genetic recombination and DNA repair. Endonuclease that resolves HJ intermediates. Cleaves cruciform DNA by making single-stranded nicks across the HJ at symmetrical positions within the homologous arms, yielding a 5'-phosphate and a 3'-hydroxyl group; requires a central core of homology in the junction. The consensus cleavage sequence is 5'-(A/T)TT(C/G)-3'. Cleavage occurs on the 3'-side of the TT dinucleotide at the point of strand exchange. HJ branch migration catalyzed by RuvA-RuvB allows RuvC to scan DNA until it finds its consensus sequence, where it cleaves and resolves the cruciform DNA. This Dictyoglomus turgidum (strain DSM 6724 / Z-1310) protein is Crossover junction endodeoxyribonuclease RuvC.